The following is a 465-amino-acid chain: Phospholipase A1-II 5 (465 aa).

The Acyl-ester intermediate role is filled by Ser-233. Active-site charge relay system residues include Ser-233, Asp-297, and His-336.

Belongs to the AB hydrolase superfamily. Lipase family.

The protein localises to the cytoplasm. Acylhydrolase that catalyzes the hydrolysis of phospholipids at the sn-1 position. This Oryza sativa subsp. indica (Rice) protein is Phospholipase A1-II 5.